Consider the following 364-residue polypeptide: Histidinol-phosphate aminotransferase 2 (364 aa).

Lys223 carries the post-translational modification N6-(pyridoxal phosphate)lysine.

The protein belongs to the class-II pyridoxal-phosphate-dependent aminotransferase family. Histidinol-phosphate aminotransferase subfamily. In terms of assembly, homodimer. Pyridoxal 5'-phosphate is required as a cofactor.

It catalyses the reaction L-histidinol phosphate + 2-oxoglutarate = 3-(imidazol-4-yl)-2-oxopropyl phosphate + L-glutamate. The protein operates within amino-acid biosynthesis; L-histidine biosynthesis; L-histidine from 5-phospho-alpha-D-ribose 1-diphosphate: step 7/9. The protein is Histidinol-phosphate aminotransferase 2 (hisC2) of Oceanobacillus iheyensis (strain DSM 14371 / CIP 107618 / JCM 11309 / KCTC 3954 / HTE831).